We begin with the raw amino-acid sequence, 386 residues long: Protein DOM34 (386 aa).

It belongs to the eukaryotic release factor 1 family. Pelota subfamily. As to quaternary structure, monomer. Component of the Dom34-Hbs1 complex, also named Pelota-HBS1L complex, composed of DOM34 and HBS1. A divalent metal cation is required as a cofactor.

Its subcellular location is the cytoplasm. In terms of biological role, component of the Dom34-Hbs1 complex, a complex that recognizes stalled ribosomes and triggers the No-Go Decay (NGD) pathway. In the Dom34-Hbs1 complex, DOM34 recognizes ribosomes stalled at the 3' end of an mRNA and engages stalled ribosomes by destabilizing mRNA in the mRNA channel. Following ribosome-binding, the Dom34-Hbs1 complex promotes the disassembly of stalled ribosomes, followed by degradation of damaged mRNAs as part of the NGD pathway. The Dom34-Hbs1 complex is also involved in non-functional rRNA decay. This is Protein DOM34 from Saccharomyces cerevisiae (strain ATCC 204508 / S288c) (Baker's yeast).